The sequence spans 268 residues: Ribosomal RNA small subunit methyltransferase A (268 aa).

6 residues coordinate S-adenosyl-L-methionine: Asn-11, Leu-13, Gly-37, Glu-58, Asp-86, and Asn-104.

This sequence belongs to the class I-like SAM-binding methyltransferase superfamily. rRNA adenine N(6)-methyltransferase family. RsmA subfamily.

The protein localises to the cytoplasm. It carries out the reaction adenosine(1518)/adenosine(1519) in 16S rRNA + 4 S-adenosyl-L-methionine = N(6)-dimethyladenosine(1518)/N(6)-dimethyladenosine(1519) in 16S rRNA + 4 S-adenosyl-L-homocysteine + 4 H(+). Functionally, specifically dimethylates two adjacent adenosines (A1518 and A1519) in the loop of a conserved hairpin near the 3'-end of 16S rRNA in the 30S particle. May play a critical role in biogenesis of 30S subunits. The polypeptide is Ribosomal RNA small subunit methyltransferase A (Campylobacter fetus subsp. fetus (strain 82-40)).